A 510-amino-acid chain; its full sequence is Lysine--tRNA ligase (510 aa).

2 residues coordinate Mg(2+): Glu-420 and Glu-427.

This sequence belongs to the class-II aminoacyl-tRNA synthetase family. In terms of assembly, homodimer. Mg(2+) is required as a cofactor.

The protein resides in the cytoplasm. The catalysed reaction is tRNA(Lys) + L-lysine + ATP = L-lysyl-tRNA(Lys) + AMP + diphosphate. The sequence is that of Lysine--tRNA ligase from Vibrio campbellii (strain ATCC BAA-1116).